We begin with the raw amino-acid sequence, 324 residues long: tRNA pseudouridine synthase B (324 aa).

The Nucleophile role is filled by D49.

Belongs to the pseudouridine synthase TruB family. Type 1 subfamily.

It carries out the reaction uridine(55) in tRNA = pseudouridine(55) in tRNA. Its function is as follows. Responsible for synthesis of pseudouridine from uracil-55 in the psi GC loop of transfer RNAs. This Brucella anthropi (strain ATCC 49188 / DSM 6882 / CCUG 24695 / JCM 21032 / LMG 3331 / NBRC 15819 / NCTC 12168 / Alc 37) (Ochrobactrum anthropi) protein is tRNA pseudouridine synthase B.